We begin with the raw amino-acid sequence, 699 residues long: tRNA 5-methylaminomethyl-2-thiouridine biosynthesis bifunctional protein MnmC (699 aa).

The tRNA (mnm(5)s(2)U34)-methyltransferase stretch occupies residues 1 to 260 (MTAKPQKSCQ…ERKLLRQQAD (260 aa)). The segment at 282–699 (VGGGLASANL…LRKLLKGKAL (418 aa)) is FAD-dependent cmnm(5)s(2)U34 oxidoreductase.

The protein in the N-terminal section; belongs to the methyltransferase superfamily. tRNA (mnm(5)s(2)U34)-methyltransferase family. In the C-terminal section; belongs to the DAO family. It depends on FAD as a cofactor.

The protein resides in the cytoplasm. The catalysed reaction is 5-aminomethyl-2-thiouridine(34) in tRNA + S-adenosyl-L-methionine = 5-methylaminomethyl-2-thiouridine(34) in tRNA + S-adenosyl-L-homocysteine + H(+). Its function is as follows. Catalyzes the last two steps in the biosynthesis of 5-methylaminomethyl-2-thiouridine (mnm(5)s(2)U) at the wobble position (U34) in tRNA. Catalyzes the FAD-dependent demodification of cmnm(5)s(2)U34 to nm(5)s(2)U34, followed by the transfer of a methyl group from S-adenosyl-L-methionine to nm(5)s(2)U34, to form mnm(5)s(2)U34. The polypeptide is tRNA 5-methylaminomethyl-2-thiouridine biosynthesis bifunctional protein MnmC (Shewanella sp. (strain MR-4)).